We begin with the raw amino-acid sequence, 817 residues long: Collagen-like protein 4 (817 aa).

3 consecutive Collagen-like domains span residues 83–142 (GDTG…KGQD), 145–264 (GSKG…KGDD), and 268–327 (GIQG…KGLK). Disordered regions lie at residues 87–107 (NKGE…GDNG), 120–458 (FNGS…DKGD), and 479–543 (IIGD…KGDI). Asn106 and Asn121 each carry an N-linked (GlcNAc...) asparagine; by host glycan. Composition is skewed to basic and acidic residues over residues 126–141 (IKGD…DKGQ) and 149–161 (QKGE…DDGI). An N-linked (GlcNAc...) asparagine; by host glycan is attached at Asn183. Composition is skewed to basic and acidic residues over residues 212–224 (IKGD…EDGI) and 233–245 (SKGE…DDGT). Low complexity predominate over residues 246–260 (KGITGLKGTKGNSGS). Basic and acidic residues predominate over residues 294-341 (KGSDGDKGNKGLDGIKGDLGDDGIKGDKGIKGLKGDTGNSDKGDKGSK). 2 N-linked (GlcNAc...) asparagine; by host glycosylation sites follow: Asn345 and Asn360. 2 consecutive Collagen-like domains span residues 352 to 411 (GDKG…KGLV) and 430 to 489 (GDKG…KGIK). Composition is skewed to basic and acidic residues over residues 354–368 (KGSK…ESGD), 377–390 (SKGD…KGDL), and 428–458 (SKGD…DKGD). Residues 480 to 494 (IGDNGSKGIKGSSNN) are compositionally biased toward low complexity. The N-linked (GlcNAc...) asparagine; by host glycan is linked to Asn483. Basic and acidic residues-rich tracts occupy residues 495-504 (KGDKGDKGNT), 515-525 (IKGDKGIKGSK), and 533-543 (EKGEKGTKGDI). Positions 512–570 (TKGIKGDKGIKGSKGDLGSVGEKGEKGTKGDIGTKGETGLKGIIGDKGELGSKGIKGLS) constitute a Collagen-like 6 domain. N-linked (GlcNAc...) asparagine; by host glycosylation is found at Asn709, Asn712, and Asn715. Gly residues predominate over residues 757–771 (GGGGASAFGNGGRGG). The disordered stretch occupies residues 757-804 (GGGGASAFGNGGRGGNTTQAATKGEYGSGGGGGSEFSPSGSTNGGDGG). Asn772 carries N-linked (GlcNAc...) asparagine; by host glycosylation.

In terms of processing, may be hydroxylated on lysine by the viral-encoded procollagen-lysine,2-oxoglutarate 5-dioxygenase.

It is found in the virion. In terms of biological role, may participate in the formation of a layer of cross-linked glycosylated fibrils at the viral surface thus giving it a hairy-like appearance. This Acanthamoeba polyphaga (Amoeba) protein is Collagen-like protein 4.